A 731-amino-acid chain; its full sequence is 1,4-alpha-glucan branching enzyme GlgB (731 aa).

The active-site Nucleophile is the Asp408. Catalysis depends on Glu461, which acts as the Proton donor.

This sequence belongs to the glycosyl hydrolase 13 family. GlgB subfamily. In terms of assembly, monomer.

The enzyme catalyses Transfers a segment of a (1-&gt;4)-alpha-D-glucan chain to a primary hydroxy group in a similar glucan chain.. Its pathway is glycan biosynthesis; glycogen biosynthesis. Its function is as follows. Catalyzes the formation of the alpha-1,6-glucosidic linkages in glycogen by scission of a 1,4-alpha-linked oligosaccharide from growing alpha-1,4-glucan chains and the subsequent attachment of the oligosaccharide to the alpha-1,6 position. This Corynebacterium glutamicum (strain ATCC 13032 / DSM 20300 / JCM 1318 / BCRC 11384 / CCUG 27702 / LMG 3730 / NBRC 12168 / NCIMB 10025 / NRRL B-2784 / 534) protein is 1,4-alpha-glucan branching enzyme GlgB.